The sequence spans 479 residues: BURP domain-containing protein 4 (479 aa).

The first 46 residues, 1 to 46, serve as a signal peptide directing secretion; the sequence is MVGKGNECAAARRRFSLRAAAASSSSSSFLPCLLLAAALSAGCCRA. The tract at residues 158–177 is disordered; sequence RADGPPKQPATFPASPNGEK. The BURP domain occupies 254–479; sequence LFLMKKLHPG…PQGYVLWLAN (226 aa). The N-linked (GlcNAc...) asparagine glycan is linked to N445.

As to expression, expressed in stamen.

This is BURP domain-containing protein 4 (BURP4) from Oryza sativa subsp. japonica (Rice).